The following is a 391-amino-acid chain: Thioredoxin-interacting protein (391 aa).

Residue Lys-212 forms a Glycyl lysine isopeptide (Lys-Gly) (interchain with G-Cter in ubiquitin) linkage. At Ser-361 the chain carries Phosphoserine.

The protein belongs to the arrestin family. Homodimer; disulfide-linked. Interacts with TXN/thioredoxin through its redox-active site. Interacts with transcriptional repressors ZBTB16, ZBTB32 and HDAC1. Interacts with DDIT4. Post-translationally, ubiquitinated; undergoes heterotypic 'Lys-48'-/'Lys-63'-branched polyubiquitination catalyzed by ITCH and UBR5 resulting in proteasomal degradation. Deubiquitinated by USP5, leading to TXNIP stabilization.

It localises to the cytoplasm. May act as an oxidative stress mediator by inhibiting thioredoxin activity or by limiting its bioavailability. Interacts with COPS5 and restores COPS5-induced suppression of CDKN1B stability, blocking the COPS5-mediated translocation of CDKN1B from the nucleus to the cytoplasm. Functions as a transcriptional repressor, possibly by acting as a bridge molecule between transcription factors and corepressor complexes, and over-expression will induce G0/G1 cell cycle arrest. Required for the maturation of natural killer cells. Acts as a suppressor of tumor cell growth. Inhibits the proteasomal degradation of DDIT4, and thereby contributes to the inhibition of the mammalian target of rapamycin complex 1 (mTORC1). The sequence is that of Thioredoxin-interacting protein (TXNIP) from Pongo abelii (Sumatran orangutan).